The following is a 170-amino-acid chain: Adenine phosphoribosyltransferase (170 aa).

It belongs to the purine/pyrimidine phosphoribosyltransferase family. In terms of assembly, homodimer.

It localises to the cytoplasm. The catalysed reaction is AMP + diphosphate = 5-phospho-alpha-D-ribose 1-diphosphate + adenine. It functions in the pathway purine metabolism; AMP biosynthesis via salvage pathway; AMP from adenine: step 1/1. Its function is as follows. Catalyzes a salvage reaction resulting in the formation of AMP, that is energically less costly than de novo synthesis. This is Adenine phosphoribosyltransferase from Mycoplasma capricolum subsp. capricolum (strain California kid / ATCC 27343 / NCTC 10154).